The primary structure comprises 207 residues: MAQGTLYIVSAPSGAGKSSLIQALLKTQPLYDTQVSVSHTTRAPRPGEVHGEHYFFVNHDEFKTMIGREAFLEHAEVFGNYYGTSRETIEQVLATGVDVFLDIDWQGAQQIREKMPQARSIFILPPSKIELDRRLRGRGQDSEEVIAKRMAQAVAEMSHYAEYDYLIVNDDFDTALSDLKTIIRAERLRMSRQKQRHDALISKLLAD.

The Guanylate kinase-like domain maps to 4–184 (GTLYIVSAPS…ALSDLKTIIR (181 aa)). 11-18 (APSGAGKS) contributes to the ATP binding site.

The protein belongs to the guanylate kinase family.

It is found in the cytoplasm. It catalyses the reaction GMP + ATP = GDP + ADP. In terms of biological role, essential for recycling GMP and indirectly, cGMP. The polypeptide is Guanylate kinase (Salmonella paratyphi A (strain ATCC 9150 / SARB42)).